Reading from the N-terminus, the 134-residue chain is Cilia- and flagella-associated protein 144 (134 aa).

The disordered stretch occupies residues 76 to 95 (QGPRKKYPETQTENQEVGWD).

It belongs to the CFAP144 family. As to quaternary structure, microtubule inner protein component of sperm flagellar doublet microtubules.

The protein localises to the cytoplasm. Its subcellular location is the cytoskeleton. The protein resides in the cilium axoneme. It is found in the flagellum axoneme. In terms of biological role, microtubule inner protein (MIP) part of the dynein-decorated doublet microtubules (DMTs) in cilia axoneme, which is required for motile cilia beating. The chain is Cilia- and flagella-associated protein 144 from Homo sapiens (Human).